We begin with the raw amino-acid sequence, 136 residues long: Small ribosomal subunit protein uS9 (136 aa).

Residues 97 to 136 (SPDNRKPLKTEGHLSRDPRAKERRKYGLKKARKAPQFSKR) are disordered. Residues 98 to 116 (PDNRKPLKTEGHLSRDPRA) are compositionally biased toward basic and acidic residues. Residues 117-136 (KERRKYGLKKARKAPQFSKR) are compositionally biased toward basic residues.

The protein belongs to the universal ribosomal protein uS9 family.

The polypeptide is Small ribosomal subunit protein uS9 (Prochlorococcus marinus (strain MIT 9312)).